The chain runs to 341 residues: UDP-glucose 4-epimerase (341 aa).

This sequence belongs to the polysaccharide synthase family.

It catalyses the reaction UDP-alpha-D-glucose = UDP-alpha-D-galactose. Functionally, epimerizes UDP-galactose to UDP-glucose. In Rickettsia conorii (strain ATCC VR-613 / Malish 7), this protein is UDP-glucose 4-epimerase (capD).